The primary structure comprises 144 residues: UPF0102 protein BTH_I3148 (144 aa).

Positions 1–20 are disordered; it reads MCHARAARQATGEAEAAPRD.

The protein belongs to the UPF0102 family.

The sequence is that of UPF0102 protein BTH_I3148 from Burkholderia thailandensis (strain ATCC 700388 / DSM 13276 / CCUG 48851 / CIP 106301 / E264).